Here is a 95-residue protein sequence, read N- to C-terminus: Small ubiquitin-related modifier 2-B (95 aa).

Lysine 11 participates in a covalent cross-link: Glycyl lysine isopeptide (Lys-Gly) (interchain with G-Cter in SUMO). One can recognise a Ubiquitin-like domain in the interval 16–95 (DHINLKVAGQ…VFQQQTGGSY (80 aa)). Glycine 93 is covalently cross-linked (Glycyl lysine isopeptide (Gly-Lys) (interchain with K-? in acceptor proteins)). Residues 94–95 (SY) constitute a propeptide that is removed on maturation.

This sequence belongs to the ubiquitin family. SUMO subfamily. In terms of assembly, interacts with sae2 and ube2i. Covalently attached to a number of proteins, including top2. Polymeric chains can be formed through Lys-11 cross-linking. In terms of processing, cleavage of precursor form by a sentrin-specific protease is necessary for function.

The protein resides in the nucleus. Functionally, ubiquitin-like protein that can be covalently attached to proteins as a monomer or as a lysine-linked polymer. Covalent attachment via an isopeptide bond to its substrates requires prior activation by the E1 complex sae1-sae2 and linkage to the E2 enzyme ube2i, and can be promoted by an E3 ligase such as pias1-4. This post-translational modification on lysine residues of proteins plays a crucial role in a number of cellular processes such as nuclear transport, DNA replication and repair, mitosis and signal transduction. Polymeric sumo2 chains are also susceptible to polyubiquitination which functions as a signal for proteasomal degradation of modified proteins. The protein is Small ubiquitin-related modifier 2-B (sumo2-b) of Xenopus laevis (African clawed frog).